Reading from the N-terminus, the 270-residue chain is tRNA pseudouridine synthase A (270 aa).

The Nucleophile role is filled by aspartate 52. Tyrosine 110 serves as a coordination point for substrate.

It belongs to the tRNA pseudouridine synthase TruA family. Homodimer.

The enzyme catalyses uridine(38/39/40) in tRNA = pseudouridine(38/39/40) in tRNA. Formation of pseudouridine at positions 38, 39 and 40 in the anticodon stem and loop of transfer RNAs. The polypeptide is tRNA pseudouridine synthase A (Paraburkholderia phytofirmans (strain DSM 17436 / LMG 22146 / PsJN) (Burkholderia phytofirmans)).